The following is a 162-amino-acid chain: Allophycocyanin subunit beta (162 aa).

Asn72 bears the N4-methylasparagine mark. Cys82 is a (2R,3E)-phycocyanobilin binding site.

It belongs to the phycobiliprotein family. Heterohexamer of two alpha chains, one alpha-B chain and three beta chains. In terms of processing, contains one covalently linked phycocyanobilin chromophore. The chromophore is added by phycocyanobilin lyase CpcS 1.

It localises to the cellular thylakoid membrane. In terms of biological role, light-harvesting photosynthetic bile pigment-protein from the phycobiliprotein complex. Allophycocyanin has a maximum absorption at approximately 650 to 653 nanometers. The chain is Allophycocyanin subunit beta (apcB) from Nostoc sp. (strain PCC 7120 / SAG 25.82 / UTEX 2576).